The chain runs to 1235 residues: Gem-associated protein 5 (1235 aa).

The WD 1 repeat unit spans residues 55–102 (STRINILALDVSPMWGLGNGGPTKPFAIVGDDLSVQVWDCALGEAVIG). The segment at 227–263 (NNLALSAEEWRSRNGGQEEKPKTKPPPLTKSKAAESD) is disordered. A compositionally biased stretch (basic and acidic residues) spans 234 to 248 (EEWRSRNGGQEEKPK). A phosphoserine mark is found at Ser289, Ser290, Ser351, and Ser354. Residues 340–368 (DCEPTKPTGPLSDASTISNKNDASDSTEG) form a disordered region. Residues 352–368 (DASTISNKNDASDSTEG) are compositionally biased toward polar residues. A Phosphothreonine modification is found at Thr355. Ser357 is modified (phosphoserine). Thr411 is modified (phosphothreonine). WD repeat units follow at residues 428–469 (ISAE…HAGK), 475–512 (KTAG…KMLR), 565–605 (TVAF…TSCL), 611–650 (YVSS…VKTH), 690–730 (TIVN…EKSW), 739–779 (LFAR…RNWK), and 788–828 (TEKA…KPPL). The LXXLL motif signature appears at 443-447 (LETLL). Positions 963-980 (KEQNNRSAKECPKCKEQS) are enriched in basic and acidic residues. The interval 963 to 983 (KEQNNRSAKECPKCKEQSPDS) is disordered.

As to quaternary structure, component of the core survival motor neuron (SMN) complex composed of Smn, Gem2, Gem3, rig/Gem5 and one of 3 almost identical Gem4 paralogs encoded by Glos/Gem4a, Gem4b or Gem4c. Interacts with nuclear receptors EcR, svp (seven up), usp (ultraspiracle), Hr39 and Hr3. In terms of tissue distribution, expressed in the brain and salivary glands of early and late second instar larvae. Expressed in nurse cells and oocytes.

It is found in the nucleus. The protein localises to the cytoplasm. Its subcellular location is the U-body. It localises to the gem. Component of the survival motor neuron (SMN) complex that catalyzes the assembly of small nuclear ribonucleoproteins (snRNPs), the building blocks of the spliceosome, and thereby plays an important role in the splicing of cellular pre-mRNAs. Nuclear receptor cofactor for the ecdysone-regulated processes of molting and puparium formation. Acts downstream from ecdysone biosynthesis and release to control the expression of specific ecdysone-regulated genes such as Eip74EF (E74). Essential in muscle and neuronal tissues for motor function, including climbing ability and flight. The chain is Gem-associated protein 5 from Drosophila melanogaster (Fruit fly).